Reading from the N-terminus, the 120-residue chain is uncharacterized protein (120 aa).

Residues 45–78 adopt a coiled-coil conformation; the sequence is QLISESLKIAQKDLMEVRKELRKRKIAIRETERD.

This is an uncharacterized protein from Bacillus subtilis (strain 168).